Here is a 119-residue protein sequence, read N- to C-terminus: Small ribosomal subunit protein bS6 (119 aa).

Belongs to the bacterial ribosomal protein bS6 family.

Functionally, binds together with bS18 to 16S ribosomal RNA. This Buchnera aphidicola subsp. Baizongia pistaciae (strain Bp) protein is Small ribosomal subunit protein bS6.